Consider the following 383-residue polypeptide: tRNA-specific 2-thiouridylase MnmA (383 aa).

ATP contacts are provided by residues 16–23 and Leu-42; that span reads AMSGGVDS. Cys-110 (nucleophile) is an active-site residue. An intrachain disulfide couples Cys-110 to Cys-209. Gly-134 provides a ligand contact to ATP. The interval 159-161 is interaction with tRNA; it reads KDQ. The active-site Cysteine persulfide intermediate is Cys-209.

Belongs to the MnmA/TRMU family.

It is found in the cytoplasm. The catalysed reaction is S-sulfanyl-L-cysteinyl-[protein] + uridine(34) in tRNA + AH2 + ATP = 2-thiouridine(34) in tRNA + L-cysteinyl-[protein] + A + AMP + diphosphate + H(+). Its function is as follows. Catalyzes the 2-thiolation of uridine at the wobble position (U34) of tRNA, leading to the formation of s(2)U34. This Caulobacter vibrioides (strain ATCC 19089 / CIP 103742 / CB 15) (Caulobacter crescentus) protein is tRNA-specific 2-thiouridylase MnmA.